We begin with the raw amino-acid sequence, 54 residues long: Rubredoxin-1 (54 aa).

The Rubredoxin-like domain occupies 1-52 (MKKWECVVCGFIYDEAEGLPDEGIEPGTAWNNVPEDWVCPDCGVGKDDFEMV). Cys-6, Cys-9, Cys-39, and Cys-42 together coordinate Fe cation.

This sequence belongs to the rubredoxin family. Requires Fe(3+) as cofactor.

The protein localises to the cytoplasm. The protein operates within hydrocarbon metabolism; alkane degradation. Its function is as follows. Involved in the hydrocarbon hydroxylating system, which transfers electrons from NADH to rubredoxin reductase and then through rubredoxin to alkane 1 monooxygenase. This chain is Rubredoxin-1 (rubA), found in Alcanivorax borkumensis (strain ATCC 700651 / DSM 11573 / NCIMB 13689 / SK2).